A 542-amino-acid polypeptide reads, in one-letter code: MRVLPATLLVGAASAAVPPLQQVLGRPEEGMSFSKPLHAFQEQLKTLSEDARKLWDEVANYFPDSMDHSPIFSLPKKHTRRPDSHWDHIVRGSDVQKIWVNNADGEKEREIDGKLEAYDLRIKKADPSALGIDPNVKQYTGYLDDNGNDKHLFYWFFESRNDPKNDPVVLWLNGGPGCSSLTGLFMELGPSSIDENIKPVYNDFSWNSNASVIFLDQPVNVGYSYSGSAVSDTVAAGKDVYALLSLFFKQFPEYAEQDFHIAGESYAGHYIPVFASEILAHKNRNINLKSVLIGNGLTDGLTQYGYYRPMGCGEGGYKAVLDEATCESMDNALPRCRSMIESCYNSESAWVCVPASIYCNNALIGPYQRTGQNVYDVRSKCEDESNLCYKGMGYVSEYLNKAEVREAVGAEVGGYDSCNFDINRNFLFHGDWMKPYHRLVPGLLEQIPVLIYAGDADYICNWLGNKAWTEALEWPGQKEYASAELEDLKIEQNEHTGKKIGQVKSHGNFTFMRLYGGGHMVPMDQPEASLEFFNRWLGGEWF.

The N-terminal stretch at 1 to 17 is a signal peptide; sequence MRVLPATLLVGAASAAV. A propeptide spanning residues 18–123 is cleaved from the precursor; sequence PPLQQVLGRP…KLEAYDLRIK (106 aa). 5 disulfides stabilise this stretch: Cys178-Cys418, Cys312-Cys326, Cys336-Cys359, Cys343-Cys352, and Cys381-Cys388. The N-linked (GlcNAc...) asparagine glycan is linked to Asn209. Ser265 is a catalytic residue. Asp457 is a catalytic residue. A glycan (N-linked (GlcNAc...) asparagine) is linked at Asn508. His519 is an active-site residue.

It belongs to the peptidase S10 family.

The protein resides in the vacuole. It carries out the reaction Release of a C-terminal amino acid with broad specificity.. Vacuolar carboxypeptidase involved in degradation of small peptides. Digests preferentially peptides containing an aliphatic or hydrophobic residue in P1' position, as well as methionine, leucine or phenylalanine in P1 position of ester substrate. This is Carboxypeptidase Y homolog A (cpyA) from Aspergillus oryzae (strain ATCC 42149 / RIB 40) (Yellow koji mold).